A 390-amino-acid polypeptide reads, in one-letter code: Alkanesulfonate monooxygenase (390 aa).

The protein belongs to the SsuD family.

It carries out the reaction an alkanesulfonate + FMNH2 + O2 = an aldehyde + FMN + sulfite + H2O + 2 H(+). Catalyzes the desulfonation of aliphatic sulfonates. The protein is Alkanesulfonate monooxygenase of Cupriavidus taiwanensis (strain DSM 17343 / BCRC 17206 / CCUG 44338 / CIP 107171 / LMG 19424 / R1) (Ralstonia taiwanensis (strain LMG 19424)).